Here is a 358-residue protein sequence, read N- to C-terminus: Peptide chain release factor 1 (358 aa).

Q233 carries the N5-methylglutamine modification.

The protein belongs to the prokaryotic/mitochondrial release factor family. Methylated by PrmC. Methylation increases the termination efficiency of RF1.

The protein resides in the cytoplasm. Functionally, peptide chain release factor 1 directs the termination of translation in response to the peptide chain termination codons UAG and UAA. In Blochmanniella floridana, this protein is Peptide chain release factor 1.